The primary structure comprises 807 residues: Ribosome-releasing factor 2, mitochondrial (807 aa).

Residues 1 to 18 (MFCRKYAFQTWKQFSRFY) constitute a mitochondrion transit peptide. The tr-type G domain occupies 27-315 (SKTRNIGIIA…GITKYLPSPL (289 aa)). Residues 36-43 (AHIDAGKT), 100-104 (DTPGH), and 154-157 (NKMD) contribute to the GTP site.

The protein belongs to the TRAFAC class translation factor GTPase superfamily. Classic translation factor GTPase family. EF-G/EF-2 subfamily.

It is found in the mitochondrion. Mitochondrial GTPase that mediates the disassembly of ribosomes from messenger RNA at the termination of mitochondrial protein biosynthesis. Not involved in the GTP-dependent ribosomal translocation step during translation elongation. The polypeptide is Ribosome-releasing factor 2, mitochondrial (Candida dubliniensis (strain CD36 / ATCC MYA-646 / CBS 7987 / NCPF 3949 / NRRL Y-17841) (Yeast)).